We begin with the raw amino-acid sequence, 234 residues long: Leucyl/phenylalanyl-tRNA--protein transferase (234 aa).

Belongs to the L/F-transferase family.

It is found in the cytoplasm. It carries out the reaction N-terminal L-lysyl-[protein] + L-leucyl-tRNA(Leu) = N-terminal L-leucyl-L-lysyl-[protein] + tRNA(Leu) + H(+). The enzyme catalyses N-terminal L-arginyl-[protein] + L-leucyl-tRNA(Leu) = N-terminal L-leucyl-L-arginyl-[protein] + tRNA(Leu) + H(+). It catalyses the reaction L-phenylalanyl-tRNA(Phe) + an N-terminal L-alpha-aminoacyl-[protein] = an N-terminal L-phenylalanyl-L-alpha-aminoacyl-[protein] + tRNA(Phe). Functions in the N-end rule pathway of protein degradation where it conjugates Leu, Phe and, less efficiently, Met from aminoacyl-tRNAs to the N-termini of proteins containing an N-terminal arginine or lysine. The chain is Leucyl/phenylalanyl-tRNA--protein transferase from Escherichia fergusonii (strain ATCC 35469 / DSM 13698 / CCUG 18766 / IAM 14443 / JCM 21226 / LMG 7866 / NBRC 102419 / NCTC 12128 / CDC 0568-73).